The chain runs to 285 residues: Gap junction Cx32.2 protein (285 aa).

The Cytoplasmic portion of the chain corresponds to 2–19 (GDLGFLSKLLDQVQSHST). Residues 20 to 40 (VIGKIWMTVLFLFRIMVLGAG) traverse the membrane as a helical segment. Residues 41 to 76 (AESVWGDEQSDFTCNTQQPGCENVCYDWTFPISHIR) are Extracellular-facing. Residues 77-99 (FWVLQIIFVSTPTLIYLGHAMHI) form a helical membrane-spanning segment. The Cytoplasmic portion of the chain corresponds to 100–148 (IQQETKLRARLSSPGGSRLCKQPKYTNEQGKVKIKGNLLGSYLTQLVFK). A helical membrane pass occupies residues 149–171 (IIIEAAFIVGQYYLYGFIMVPMF). The Extracellular segment spans residues 172–194 (PCSKKPCPFTVECYMSRPTEKTI). The chain crosses the membrane as a helical span at residues 195–217 (FIIFMLVVACVSLLLNVIEVFYL). Residues 218–285 (ICTRVRCGSR…AKEEKRLLSH (68 aa)) lie on the Cytoplasmic side of the membrane. Residues 264-285 (ETSQSIGGSLDGAKEEKRLLSH) form a disordered region. A compositionally biased stretch (basic and acidic residues) spans 275–285 (GAKEEKRLLSH).

The protein belongs to the connexin family. Beta-type (group I) subfamily. A connexon is composed of a hexamer of connexins.

Its subcellular location is the cell membrane. It localises to the cell junction. It is found in the gap junction. Functionally, one gap junction consists of a cluster of closely packed pairs of transmembrane channels, the connexons, through which materials of low MW diffuse from one cell to a neighboring cell. May be involved in ovarian follicular maturation. This is Gap junction Cx32.2 protein from Micropogonias undulatus (Atlantic croaker).